The following is a 355-amino-acid chain: Tryptophan--tRNA ligase (355 aa).

ATP-binding positions include 13–15 (QPT) and 21–22 (GN). The 'HIGH' region motif lies at 14 to 22 (PTGNLHLGN). L-tryptophan is bound at residue D137. ATP contacts are provided by residues 149–151 (GED), I208, and 217–221 (KMSKS). The short motif at 217-221 (KMSKS) is the 'KMSKS' region element.

It belongs to the class-I aminoacyl-tRNA synthetase family. In terms of assembly, homodimer.

The protein resides in the cytoplasm. It catalyses the reaction tRNA(Trp) + L-tryptophan + ATP = L-tryptophyl-tRNA(Trp) + AMP + diphosphate + H(+). In terms of biological role, catalyzes the attachment of tryptophan to tRNA(Trp). This Brucella melitensis biotype 1 (strain ATCC 23456 / CCUG 17765 / NCTC 10094 / 16M) protein is Tryptophan--tRNA ligase.